The sequence spans 124 residues: Small ribosomal subunit protein bS6 (124 aa).

The span at 105–115 (EVQHEEARKSA) shows a compositional bias: basic and acidic residues. Positions 105–124 (EVQHEEARKSAQSDAPVAAA) are disordered.

This sequence belongs to the bacterial ribosomal protein bS6 family.

Its function is as follows. Binds together with bS18 to 16S ribosomal RNA. The chain is Small ribosomal subunit protein bS6 from Polynucleobacter necessarius subsp. necessarius (strain STIR1).